We begin with the raw amino-acid sequence, 160 residues long: Periplasmic nitrate reductase, electron transfer subunit (160 aa).

Residues 1 to 25 (MKTRIIFAALALAAAMPLLVSGVFA) form the signal peptide. 8 residues coordinate heme c: histidine 73, cysteine 87, cysteine 90, histidine 91, histidine 108, cysteine 127, cysteine 130, and histidine 131.

Belongs to the NapB family. In terms of assembly, component of the periplasmic nitrate reductase NapAB complex composed of NapA and NapB. Post-translationally, binds 2 heme C groups per subunit.

It is found in the periplasm. Electron transfer subunit of the periplasmic nitrate reductase complex NapAB. Receives electrons from the membrane-anchored tetraheme c-type NapC protein and transfers these to NapA subunit, thus allowing electron flow between membrane and periplasm. Essential for periplasmic nitrate reduction with nitrate as the terminal electron acceptor. This Azospirillum brasilense protein is Periplasmic nitrate reductase, electron transfer subunit.